A 112-amino-acid chain; its full sequence is Peptidyl-tRNA hydrolase (112 aa).

The protein belongs to the PTH2 family.

The protein resides in the cytoplasm. It catalyses the reaction an N-acyl-L-alpha-aminoacyl-tRNA + H2O = an N-acyl-L-amino acid + a tRNA + H(+). In terms of biological role, the natural substrate for this enzyme may be peptidyl-tRNAs which drop off the ribosome during protein synthesis. The sequence is that of Peptidyl-tRNA hydrolase from Methanothermobacter thermautotrophicus (strain ATCC 29096 / DSM 1053 / JCM 10044 / NBRC 100330 / Delta H) (Methanobacterium thermoautotrophicum).